Reading from the N-terminus, the 313-residue chain is Mitochondrial uncoupling protein 5 (313 aa).

Solcar repeat units follow at residues 4–108 (KGFA…IKGE), 117–208 (MPLM…VKET), and 217–307 (DGLG…VKKL). Transmembrane regions (helical) follow at residues 6–26 (FAEG…LDLI), 77–97 (MRAL…YSTT), 123–143 (IGAG…ADVA), 182–202 (RGSS…LASY), 223–243 (VSAS…VDVI), and 280–300 (YKGF…LFVT).

This sequence belongs to the mitochondrial carrier (TC 2.A.29) family. Expressed in roots, leaves, stems and flowers.

Its subcellular location is the mitochondrion inner membrane. PUMPS are mitochondrial transporter proteins that create proton leaks across the inner mitochondrial membrane, thus uncoupling oxidative phosphorylation. This leads to a decrease in the efficiency of oxidative phosphorylation and an increase in heat production. May be involved in protecting plant cells against oxidative stress damage. Recombinant PUMP5, reconstituted into liposomes, transports a wide range of dicarboxylic acids including malate, oxaloacetate and succinate as well as phosphate, sulfate and thiosulfate. However, it is unknown if these transports are of any biological significance in vivo. The polypeptide is Mitochondrial uncoupling protein 5 (PUMP5) (Arabidopsis thaliana (Mouse-ear cress)).